A 107-amino-acid polypeptide reads, in one-letter code: UPF0145 protein BT_3410 (107 aa).

The protein belongs to the UPF0145 family.

The sequence is that of UPF0145 protein BT_3410 from Bacteroides thetaiotaomicron (strain ATCC 29148 / DSM 2079 / JCM 5827 / CCUG 10774 / NCTC 10582 / VPI-5482 / E50).